A 207-amino-acid polypeptide reads, in one-letter code: dITP/XTP pyrophosphatase (207 aa).

Residue 7–12 coordinates substrate; sequence SNNAKK. Residue Asp-72 is the Proton acceptor of the active site. A Mg(2+)-binding site is contributed by Asp-72. Substrate is bound by residues Ser-73, 155–158, Lys-184, and 189–190; these read FGYD and HR.

The protein belongs to the HAM1 NTPase family. Homodimer. Mg(2+) is required as a cofactor.

The catalysed reaction is XTP + H2O = XMP + diphosphate + H(+). It catalyses the reaction dITP + H2O = dIMP + diphosphate + H(+). It carries out the reaction ITP + H2O = IMP + diphosphate + H(+). In terms of biological role, pyrophosphatase that catalyzes the hydrolysis of nucleoside triphosphates to their monophosphate derivatives, with a high preference for the non-canonical purine nucleotides XTP (xanthosine triphosphate), dITP (deoxyinosine triphosphate) and ITP. Seems to function as a house-cleaning enzyme that removes non-canonical purine nucleotides from the nucleotide pool, thus preventing their incorporation into DNA/RNA and avoiding chromosomal lesions. The protein is dITP/XTP pyrophosphatase of Corynebacterium efficiens (strain DSM 44549 / YS-314 / AJ 12310 / JCM 11189 / NBRC 100395).